We begin with the raw amino-acid sequence, 215 residues long: Chaperone protein TorD (215 aa).

It belongs to the TorD/DmsD family. TorD subfamily.

The protein localises to the cytoplasm. Involved in the biogenesis of TorA. Acts on TorA before the insertion of the molybdenum cofactor and, as a result, probably favors a conformation of the apoenzyme that is competent for acquiring the cofactor. The chain is Chaperone protein TorD from Aliivibrio salmonicida (strain LFI1238) (Vibrio salmonicida (strain LFI1238)).